The chain runs to 842 residues: Ionotropic receptor 21a (842 aa).

The signal sequence occupies residues 1 to 15; sequence MSYYWVALVLFTAQA. N325 carries an N-linked (GlcNAc...) asparagine glycan. Helical transmembrane passes span 405–425 and 437–457; these read WPVW…IVFT and WGEV…AFSF. The N-linked (GlcNAc...) asparagine glycan is linked to N469. The helical transmembrane segment at 479–499 threads the bilayer; it reads WLFTIIITSCYTGSIIAFVTL. Residues N533, N558, N583, and N588 are each glycosylated (N-linked (GlcNAc...) asparagine). Residues 680–700 form a helical membrane-spanning segment; sequence MFLLMALGYFLGATALVSEIV. Residues 722-745 are disordered; sequence WSSASSGSMLRTNAEQLSHDKRKA. 2 N-linked (GlcNAc...) asparagine glycosylation sites follow: N765 and N797.

The protein belongs to the glutamate-gated ion channel (TC 1.A.10.1) family. Expressed in the dorsal organ cool cells. In the antenna, expressed in approximately six neurons in the arista as well as five to ten neurons near the third chamber of the sacculus.

The protein localises to the cell membrane. Its function is as follows. Integral part of a neural sensory system in the antenna that provides the neural basis for the response to environmental changes in temperature (thermosensation). Together with Ir25a and Ir93a, mediates the response of the dorsal organ cool cells, a trio of cool-responsive neurons, to cooling and is required for cool avoidance behavior. This is Ionotropic receptor 21a from Drosophila melanogaster (Fruit fly).